Reading from the N-terminus, the 353-residue chain is Photosystem II protein D1 (353 aa).

Residue Thr2 is modified to N-acetylthreonine. Thr2 bears the Phosphothreonine mark. Helical transmembrane passes span 29–46, 118–133, and 142–156; these read YIGW…TATS, HFLL…EWEL, and WIAV…AATA. His118 serves as a coordination point for chlorophyll a. Tyr126 serves as a coordination point for pheophytin a. [CaMn4O5] cluster-binding residues include Asp170 and Glu189. A helical transmembrane segment spans residues 197-218; the sequence is FHMLGVAGVFGGSLFSAMHGSL. His198 serves as a coordination point for chlorophyll a. Residues His215 and 264-265 each bind a quinone; that span reads SF. His215 provides a ligand contact to Fe cation. His272 lines the Fe cation pocket. The helical transmembrane segment at 274-288 threads the bilayer; it reads LLAAWPVVGIWFTAL. The [CaMn4O5] cluster site is built by His332, Glu333, Asp342, and Ala344. A propeptide spanning residues 345–353 is cleaved from the precursor; sequence AVEAPSTNG.

This sequence belongs to the reaction center PufL/M/PsbA/D family. As to quaternary structure, PSII is composed of 1 copy each of membrane proteins PsbA, PsbB, PsbC, PsbD, PsbE, PsbF, PsbH, PsbI, PsbJ, PsbK, PsbL, PsbM, PsbT, PsbX, PsbY, PsbZ, Psb30/Ycf12, at least 3 peripheral proteins of the oxygen-evolving complex and a large number of cofactors. It forms dimeric complexes. It depends on The D1/D2 heterodimer binds P680, chlorophylls that are the primary electron donor of PSII, and subsequent electron acceptors. It shares a non-heme iron and each subunit binds pheophytin, quinone, additional chlorophylls, carotenoids and lipids. D1 provides most of the ligands for the Mn4-Ca-O5 cluster of the oxygen-evolving complex (OEC). There is also a Cl(-1) ion associated with D1 and D2, which is required for oxygen evolution. The PSII complex binds additional chlorophylls, carotenoids and specific lipids. as a cofactor. Post-translationally, tyr-161 forms a radical intermediate that is referred to as redox-active TyrZ, YZ or Y-Z. C-terminally processed by CTPA; processing is essential to allow assembly of the oxygen-evolving complex and thus photosynthetic growth.

Its subcellular location is the plastid. It localises to the chloroplast thylakoid membrane. It carries out the reaction 2 a plastoquinone + 4 hnu + 2 H2O = 2 a plastoquinol + O2. Functionally, photosystem II (PSII) is a light-driven water:plastoquinone oxidoreductase that uses light energy to abstract electrons from H(2)O, generating O(2) and a proton gradient subsequently used for ATP formation. It consists of a core antenna complex that captures photons, and an electron transfer chain that converts photonic excitation into a charge separation. The D1/D2 (PsbA/PsbD) reaction center heterodimer binds P680, the primary electron donor of PSII as well as several subsequent electron acceptors. The polypeptide is Photosystem II protein D1 (Dioscorea elephantipes (Elephant's foot yam)).